We begin with the raw amino-acid sequence, 285 residues long: HTH-type transcriptional regulator MurR (285 aa).

The HTH rpiR-type domain maps to 1–77 (MLYLTKIRNA…MALIGEYSAS (77 aa)). A DNA-binding region (H-T-H motif) is located at residues 37 to 56 (SRKMAKQLGISQSSIVKFAQ). Positions 128–268 (IIEVISKAPF…FVGLVQLNDV (141 aa)) constitute an SIS domain.

As to quaternary structure, homotetramer.

The protein operates within amino-sugar metabolism; N-acetylmuramate degradation [regulation]. In terms of biological role, represses the expression of the murPQ operon involved in the uptake and degradation of N-acetylmuramic acid (MurNAc). Binds to two adjacent inverted repeats within the operator region. MurNAc 6-phosphate, the substrate of MurQ, is the specific inducer that weakens binding of MurR to the operator. This is HTH-type transcriptional regulator MurR from Escherichia coli O7:K1 (strain IAI39 / ExPEC).